A 289-amino-acid polypeptide reads, in one-letter code: Cuticle collagen 19 (289 aa).

The N-terminal stretch at 1-18 is a signal peptide; it reads MGKLIVVGSCGVLVCVLA. The disordered stretch occupies residues 95–289; the sequence is SEGCPAGPPG…PCPSRAAYKA (195 aa). Triple-helical region stretches follow at residues 101–130 and 147–269; these read GPPGPPGEGGQKGNPGHDGDDGKPGAPGVI and GRPG…KGED. Gly residues predominate over residues 162 to 183; it reads GPAGGNGRRGPPGPVGGPGEQG. Low complexity-rich tracts occupy residues 184–207 and 223–239; these read PQGDAGRPGAAGRPGPAGPRGEPG and PRGETGPAGNPGAPGND.

This sequence belongs to the cuticular collagen family. Collagen polypeptide chains are complexed within the cuticle by disulfide bonds and other types of covalent cross-links.

In terms of biological role, nematode cuticles are composed largely of collagen-like proteins. The cuticle functions both as an exoskeleton and as a barrier to protect the worm from its environment. The protein is Cuticle collagen 19 (col-19) of Caenorhabditis elegans.